The following is a 103-amino-acid chain: Large ribosomal subunit protein bL36m (103 aa).

Belongs to the bacterial ribosomal protein bL36 family. In terms of assembly, component of the mitochondrial large ribosomal subunit (mt-LSU). Mature mammalian 55S mitochondrial ribosomes consist of a small (28S) and a large (39S) subunit. The 28S small subunit contains a 12S ribosomal RNA (12S mt-rRNA) and 30 different proteins. The 39S large subunit contains a 16S rRNA (16S mt-rRNA), a copy of mitochondrial valine transfer RNA (mt-tRNA(Val)), which plays an integral structural role, and 52 different proteins. bL36m has a zinc binding site.

It is found in the mitochondrion. In Homo sapiens (Human), this protein is Large ribosomal subunit protein bL36m (MRPL36).